A 463-amino-acid polypeptide reads, in one-letter code: Adenylosuccinate synthetase, chloroplastic (463 aa).

GTP-binding positions include 44–50 and 72–74; these read GDEGKGK and GHT. The active-site Proton acceptor is the D45. 2 residues coordinate Mg(2+): D45 and G72. IMP contacts are provided by residues 45–48, 70–73, T164, R178, N256, T271, and R335; these read DEGK and NAGH. The active-site Proton donor is the H73. 331-337 contributes to the substrate binding site; sequence TTTGRPR. GTP is bound by residues R337, 363–365, and 446–448; these read KLD and GVG.

This sequence belongs to the adenylosuccinate synthetase family. Homodimer. It depends on Mg(2+) as a cofactor.

The protein resides in the plastid. It localises to the chloroplast. The enzyme catalyses IMP + L-aspartate + GTP = N(6)-(1,2-dicarboxyethyl)-AMP + GDP + phosphate + 2 H(+). It participates in purine metabolism; AMP biosynthesis via de novo pathway; AMP from IMP: step 1/2. Its function is as follows. Plays an important role in the de novo pathway and in the salvage pathway of purine nucleotide biosynthesis. Catalyzes the first committed step in the biosynthesis of AMP from IMP. The chain is Adenylosuccinate synthetase, chloroplastic from Chlamydomonas reinhardtii (Chlamydomonas smithii).